We begin with the raw amino-acid sequence, 582 residues long: 2-succinyl-5-enolpyruvyl-6-hydroxy-3-cyclohexene-1-carboxylate synthase (582 aa).

It belongs to the TPP enzyme family. MenD subfamily. As to quaternary structure, homodimer. Requires Mg(2+) as cofactor. Mn(2+) is required as a cofactor. The cofactor is thiamine diphosphate.

The catalysed reaction is isochorismate + 2-oxoglutarate + H(+) = 5-enolpyruvoyl-6-hydroxy-2-succinyl-cyclohex-3-ene-1-carboxylate + CO2. Its pathway is quinol/quinone metabolism; 1,4-dihydroxy-2-naphthoate biosynthesis; 1,4-dihydroxy-2-naphthoate from chorismate: step 2/7. It participates in cofactor biosynthesis; phylloquinone biosynthesis. Functionally, catalyzes the thiamine diphosphate-dependent decarboxylation of 2-oxoglutarate and the subsequent addition of the resulting succinic semialdehyde-thiamine pyrophosphate anion to isochorismate to yield 2-succinyl-5-enolpyruvyl-6-hydroxy-3-cyclohexene-1-carboxylate (SEPHCHC). The chain is 2-succinyl-5-enolpyruvyl-6-hydroxy-3-cyclohexene-1-carboxylate synthase from Synechococcus elongatus (strain ATCC 33912 / PCC 7942 / FACHB-805) (Anacystis nidulans R2).